A 210-amino-acid polypeptide reads, in one-letter code: Regulatory protein RecX (210 aa).

The segment at 28–47 is disordered; that stretch reads SRRQEEGAASSLFDREAEEK.

The protein belongs to the RecX family.

It localises to the cytoplasm. In terms of biological role, modulates RecA activity. The polypeptide is Regulatory protein RecX (Corynebacterium efficiens (strain DSM 44549 / YS-314 / AJ 12310 / JCM 11189 / NBRC 100395)).